Consider the following 518-residue polypeptide: Probable alginate O-acetylase AlgI (518 aa).

A run of 8 helical transmembrane segments spans residues 2–24 (VFSS…YLSG), 39–61 (FYAW…NYWI), 78–100 (WLLL…NFGV), 115–137 (FILT…ISYI), 150–172 (NLID…VLRF), 319–341 (GLWH…WLAI), 354–373 (FNVI…WVIF), and 402–424 (ASLT…FFGL). Residue histidine 322 is part of the active site. The segment at 435-456 (SGKSARADGPATEQPGTIKAVP) is disordered. Residues 493–515 (LILLLFVASILKLSAQSFSPFLY) traverse the membrane as a helical segment.

Belongs to the membrane-bound acyltransferase family.

The protein resides in the cell inner membrane. It functions in the pathway glycan biosynthesis; alginate biosynthesis. Together with AlgJ and AlgF, forms an inner membrane complex which probably interacts with the alginate polymerization-transport complex and adds acetyl groups at the O-2 and O-3 positions of mannuronate residues. Acetylation of alginate is important for the architecture of biofilms and increases the ability of alginate to act as a defense barrier. This chain is Probable alginate O-acetylase AlgI (algI), found in Pseudomonas syringae pv. tomato (strain ATCC BAA-871 / DC3000).